A 484-amino-acid polypeptide reads, in one-letter code: UDP-N-acetylmuramate--L-alanine ligase (484 aa).

125-131 (GTHGKTT) is a binding site for ATP.

It belongs to the MurCDEF family.

Its subcellular location is the cytoplasm. The catalysed reaction is UDP-N-acetyl-alpha-D-muramate + L-alanine + ATP = UDP-N-acetyl-alpha-D-muramoyl-L-alanine + ADP + phosphate + H(+). It functions in the pathway cell wall biogenesis; peptidoglycan biosynthesis. Functionally, cell wall formation. The chain is UDP-N-acetylmuramate--L-alanine ligase from Buchnera aphidicola subsp. Acyrthosiphon pisum (strain 5A).